Consider the following 667-residue polypeptide: Mannosyl-oligosaccharide alpha-1,2-mannosidase IA (667 aa).

Residues 1–18 (MYRISPIGRKSNFHSREK) are Cytoplasmic-facing. The chain crosses the membrane as a helical; Signal-anchor for type II membrane protein span at residues 19 to 39 (CLIGLVLVTLCFLCFGGIFLL). Topologically, residues 40–667 (PDNFGSDRVL…PVTLPVSNAS (628 aa)) are lumenal. The segment at 154-192 (GDNAASQASSHPQSSAQQHNQQQPQLPLGGGGNDQAPDT) is disordered. The segment covering 156-178 (NAASQASSHPQSSAQQHNQQQPQ) has biased composition (low complexity). N278 carries an N-linked (GlcNAc...) asparagine glycan. The cysteines at positions 483 and 515 are disulfide-linked. E529 serves as the catalytic Proton donor. T640 lines the Ca(2+) pocket.

The protein belongs to the glycosyl hydrolase 47 family. Requires Ca(2+) as cofactor. Mg(2+) serves as cofactor. As to expression, complex spatial distribution during embryogenesis, including expression in lobula plate giant neurons. Also expressed in adult wing and eyes.

The protein localises to the golgi apparatus membrane. The catalysed reaction is N(4)-(alpha-D-Man-(1-&gt;2)-alpha-D-Man-(1-&gt;2)-alpha-D-Man-(1-&gt;3)-[alpha-D-Man-(1-&gt;2)-alpha-D-Man-(1-&gt;3)-[alpha-D-Man-(1-&gt;2)-alpha-D-Man-(1-&gt;6)]-alpha-D-Man-(1-&gt;6)]-beta-D-Man-(1-&gt;4)-beta-D-GlcNAc-(1-&gt;4)-beta-D-GlcNAc)-L-asparaginyl-[protein] (N-glucan mannose isomer 9A1,2,3B1,2,3) + 4 H2O = N(4)-(alpha-D-Man-(1-&gt;3)-[alpha-D-Man-(1-&gt;3)-[alpha-D-Man-(1-&gt;6)]-alpha-D-Man-(1-&gt;6)]-beta-D-Man-(1-&gt;4)-beta-D-GlcNAc-(1-&gt;4)-beta-D-GlcNAc)-L-asparaginyl-[protein] (N-glucan mannose isomer 5A1,2) + 4 beta-D-mannose. It carries out the reaction N(4)-(alpha-D-Man-(1-&gt;2)-alpha-D-Man-(1-&gt;2)-alpha-D-Man-(1-&gt;3)-[alpha-D-Man-(1-&gt;3)-[alpha-D-Man-(1-&gt;2)-alpha-D-Man-(1-&gt;6)]-alpha-D-Man-(1-&gt;6)]-beta-D-Man-(1-&gt;4)-beta-D-GlcNAc-(1-&gt;4)-beta-D-GlcNAc)-L-asparaginyl-[protein] (N-glucan mannose isomer 8A1,2,3B1,3) + 3 H2O = N(4)-(alpha-D-Man-(1-&gt;3)-[alpha-D-Man-(1-&gt;3)-[alpha-D-Man-(1-&gt;6)]-alpha-D-Man-(1-&gt;6)]-beta-D-Man-(1-&gt;4)-beta-D-GlcNAc-(1-&gt;4)-beta-D-GlcNAc)-L-asparaginyl-[protein] (N-glucan mannose isomer 5A1,2) + 3 beta-D-mannose. Its pathway is protein modification; protein glycosylation. Functionally, involved in the maturation of Asn-linked oligosaccharides. Progressively trim alpha-1,2-linked mannose residues from Man(9)GlcNAc(2) to produce Man(5)GlcNAc(2). The sequence is that of Mannosyl-oligosaccharide alpha-1,2-mannosidase IA from Drosophila melanogaster (Fruit fly).